The chain runs to 292 residues: Xyloglucan endotransglucosylase/hydrolase protein 2 (292 aa).

The first 24 residues, 1 to 24 (MNRIRYCFELVSVLFLMFTANARA), serve as a signal peptide directing secretion. In terms of domain architecture, GH16 spans 25 to 219 (RGRGAIDFDV…WAYAPFKAQY (195 aa)). Glutamate 106 (nucleophile) is an active-site residue. Glutamate 110 (proton donor) is an active-site residue. Xyloglucan is bound by residues glutamate 110, 123–125 (QTN), 133–135 (GRE), 198–199 (NW), and glycine 203. 2 disulfides stabilise this stretch: cysteine 227–cysteine 239 and cysteine 275–cysteine 288. Arginine 280 contributes to the xyloglucan binding site.

Belongs to the glycosyl hydrolase 16 family. XTH group 1 subfamily. Post-translationally, contains at least one intrachain disulfide bond essential for its enzymatic activity.

The protein resides in the secreted. Its subcellular location is the cell wall. It localises to the extracellular space. It is found in the apoplast. It catalyses the reaction breaks a beta-(1-&gt;4) bond in the backbone of a xyloglucan and transfers the xyloglucanyl segment on to O-4 of the non-reducing terminal glucose residue of an acceptor, which can be a xyloglucan or an oligosaccharide of xyloglucan.. May catalyze xyloglucan endohydrolysis (XEH) and/or endotransglycosylation (XET). Cleaves and religates xyloglucan polymers, an essential constituent of the primary cell wall, and thereby participates in cell wall construction of growing tissues. The polypeptide is Xyloglucan endotransglucosylase/hydrolase protein 2 (XTH2) (Arabidopsis thaliana (Mouse-ear cress)).